A 488-amino-acid polypeptide reads, in one-letter code: MSDFIASKEDDYSKWYLDIVQKAKLADYSPVKGCMVIMPYGYSIWSKIQSILDKKFKETGHENAYFPMLIPYSFLEREKDHIDGFSPEFAIIKDAGGESLAEPLVLRPTSETIIWNMYSKWIKSYRDLPLKINQWANVVRWEKRTRPFLRTTEFLWQEGHTAHATEEEALEETLLILDVYKRFIEDYLAIPVFCGKKSEKEKFAGAVSTYSIEALMQDKKALQAATSHYLGLNFAKAFDVKFQDKDGKMRHVFASSWGVSTRLIGALIMVHSDEKGLVLPPRIAPIEIIVIPIFKKEDEINKKILDYCDCVVDALKKAGFRVEIDKDVRSSPGFRFSSAEFKGIPIRLEVGINDVLLNSVTISRRDKDRKFKYQISLDSLVSKVKVELDLMQKDLFQRALNFRILNTKEIFRSSKDSYETFKAYVNDYSGFVLSCWCGSLNCENIIKNETKATIRCIPDDFKARDLTGMTCIYCSSKAKYFVLFAKSY.

The protein belongs to the class-II aminoacyl-tRNA synthetase family. ProS type 3 subfamily. In terms of assembly, homodimer.

Its subcellular location is the cytoplasm. The catalysed reaction is tRNA(Pro) + L-proline + ATP = L-prolyl-tRNA(Pro) + AMP + diphosphate. Functionally, catalyzes the attachment of proline to tRNA(Pro) in a two-step reaction: proline is first activated by ATP to form Pro-AMP and then transferred to the acceptor end of tRNA(Pro). This is Proline--tRNA ligase from Borreliella burgdorferi (strain ZS7) (Borrelia burgdorferi).